The chain runs to 437 residues: Serine carboxypeptidase-like 10 (437 aa).

The first 21 residues, Met1–Ser21, serve as a signal peptide directing secretion. Cystine bridges form between Cys80/Cys327, Cys243/Cys257, and Cys281/Cys293. Asn101 is a glycosylation site (N-linked (GlcNAc...) asparagine). Residue Ser175 is part of the active site. A glycan (N-linked (GlcNAc...) asparagine) is linked at Asn328. The active site involves Asp362. Asn378 carries an N-linked (GlcNAc...) asparagine glycan. The active site involves His415. A glycan (N-linked (GlcNAc...) asparagine) is linked at Asn422.

The protein belongs to the peptidase S10 family. Expressed in senescent leaves.

It localises to the secreted. In terms of biological role, involved in the biosynthesis of sinapoylated anthocyanins. This is Serine carboxypeptidase-like 10 (SCPL10) from Arabidopsis thaliana (Mouse-ear cress).